Reading from the N-terminus, the 446-residue chain is Glutamate--tRNA ligase 2 (446 aa).

Positions 8 to 18 (PSPTGYLHIGN) match the 'HIGH' region motif. The short motif at 239-243 (GLSKR) is the 'KMSKS' region element. Lysine 242 contacts ATP.

The protein belongs to the class-I aminoacyl-tRNA synthetase family. Glutamate--tRNA ligase type 1 subfamily. In terms of assembly, monomer.

It is found in the cytoplasm. The enzyme catalyses tRNA(Glu) + L-glutamate + ATP = L-glutamyl-tRNA(Glu) + AMP + diphosphate. Catalyzes the attachment of glutamate to tRNA(Glu) in a two-step reaction: glutamate is first activated by ATP to form Glu-AMP and then transferred to the acceptor end of tRNA(Glu). This is Glutamate--tRNA ligase 2 from Methylobacterium radiotolerans (strain ATCC 27329 / DSM 1819 / JCM 2831 / NBRC 15690 / NCIMB 10815 / 0-1).